A 350-amino-acid chain; its full sequence is Protein RecA (350 aa).

65 to 72 (GPESSGKT) serves as a coordination point for ATP.

The protein belongs to the RecA family.

The protein resides in the cytoplasm. Its function is as follows. Can catalyze the hydrolysis of ATP in the presence of single-stranded DNA, the ATP-dependent uptake of single-stranded DNA by duplex DNA, and the ATP-dependent hybridization of homologous single-stranded DNAs. It interacts with LexA causing its activation and leading to its autocatalytic cleavage. This Nautilia profundicola (strain ATCC BAA-1463 / DSM 18972 / AmH) protein is Protein RecA.